The following is a 359-amino-acid chain: 3-isopropylmalate dehydrogenase (359 aa).

77–88 (GPKWGTGDVRPE) contributes to the NAD(+) binding site. 4 residues coordinate substrate: Arg-95, Arg-105, Arg-134, and Asp-223. Residues Asp-223, Asp-248, and Asp-252 each contribute to the Mg(2+) site. 287–298 (GSAPDLPAGKVN) contributes to the NAD(+) binding site.

It belongs to the isocitrate and isopropylmalate dehydrogenases family. In terms of assembly, homodimer. Mg(2+) serves as cofactor. Mn(2+) is required as a cofactor.

The protein resides in the cytoplasm. The catalysed reaction is (2R,3S)-3-isopropylmalate + NAD(+) = 4-methyl-2-oxopentanoate + CO2 + NADH. It participates in amino-acid biosynthesis; L-leucine biosynthesis; L-leucine from 3-methyl-2-oxobutanoate: step 3/4. Functionally, catalyzes the oxidation of 3-carboxy-2-hydroxy-4-methylpentanoate (3-isopropylmalate) to 3-carboxy-4-methyl-2-oxopentanoate. The product decarboxylates to 4-methyl-2 oxopentanoate. The sequence is that of 3-isopropylmalate dehydrogenase (LEU2) from Diutina rugosa (Yeast).